The chain runs to 419 residues: Dimethylamine methyltransferase MtbB2 (419 aa).

Position 308 (pyrrolysine 308) is a non-standard amino acid, pyrrolysine.

The protein belongs to the dimethylamine methyltransferase family.

It carries out the reaction Co(I)-[dimethylamine-specific corrinoid protein] + dimethylamine + H(+) = methyl-Co(III)-[dimethylamine-specific corrinoid protein] + methylamine. It participates in one-carbon metabolism; methanogenesis from dimethylamine. In terms of biological role, catalyzes the transfer of a methyl group from dimethylamine to the corrinoid cofactor of MtbC. No evidence for expression of this protein has been found after growth under presumably inducing conditions. This chain is Dimethylamine methyltransferase MtbB2, found in Methanosarcina barkeri.